Consider the following 313-residue polypeptide: Pyrimidine-specific ribonucleoside hydrolase RihB (313 aa).

Aspartate 11 acts as the Proton acceptor in catalysis. Ca(2+)-binding residues include aspartate 11, aspartate 16, and valine 124. Residues glutamine 227 and histidine 239 each contribute to the substrate site. Residue aspartate 240 participates in Ca(2+) binding.

The protein belongs to the IUNH family. RihB subfamily. In terms of assembly, homotetramer. Ca(2+) is required as a cofactor.

It catalyses the reaction a pyrimidine ribonucleoside + H2O = a pyrimidine nucleobase + D-ribose. Functionally, hydrolyzes cytidine or uridine to ribose and cytosine or uracil, respectively. Has a clear preference for cytidine over uridine. Strictly specific for ribonucleosides. In Escherichia coli (strain SMS-3-5 / SECEC), this protein is Pyrimidine-specific ribonucleoside hydrolase RihB.